Consider the following 256-residue polypeptide: tRNA pseudouridine synthase A (256 aa).

Asp43 serves as the catalytic Nucleophile. Substrate is bound at residue Tyr94.

Belongs to the tRNA pseudouridine synthase TruA family.

It carries out the reaction uridine(38/39/40) in tRNA = pseudouridine(38/39/40) in tRNA. Functionally, formation of pseudouridine at positions 38, 39 and 40 in the anticodon stem and loop of transfer RNAs. The chain is tRNA pseudouridine synthase A from Pyrobaculum aerophilum (strain ATCC 51768 / DSM 7523 / JCM 9630 / CIP 104966 / NBRC 100827 / IM2).